Reading from the N-terminus, the 368-residue chain is Putative phospho-2-dehydro-3-deoxyheptonate aldolase (368 aa).

Belongs to the class-I DAHP synthase family.

The enzyme catalyses D-erythrose 4-phosphate + phosphoenolpyruvate + H2O = 7-phospho-2-dehydro-3-deoxy-D-arabino-heptonate + phosphate. Its pathway is metabolic intermediate biosynthesis; chorismate biosynthesis; chorismate from D-erythrose 4-phosphate and phosphoenolpyruvate: step 1/7. Its function is as follows. Stereospecific condensation of phosphoenolpyruvate (PEP) and D-erythrose-4-phosphate (E4P) giving rise to 3-deoxy-D-arabino-heptulosonate-7-phosphate (DAHP). This chain is Putative phospho-2-dehydro-3-deoxyheptonate aldolase, found in Schizosaccharomyces pombe (strain 972 / ATCC 24843) (Fission yeast).